Here is a 113-residue protein sequence, read N- to C-terminus: uncharacterized protein (113 aa).

Helical transmembrane passes span 1-21 (MLIAGTLCVCAAVISAVFGTW) and 48-68 (IMLAAGGVVALVAVAHTALIV).

It to M.tuberculosis Rv0039.

The protein localises to the cell membrane. This is an uncharacterized protein from Mycobacterium leprae (strain TN).